We begin with the raw amino-acid sequence, 350 residues long: Kelch domain-containing protein 8A (350 aa).

Kelch repeat units follow at residues M1–G31, Q32–K79, I81–Y127, R128–S175, K176–N222, L224–G278, and R279–N326.

This Homo sapiens (Human) protein is Kelch domain-containing protein 8A (KLHDC8A).